Consider the following 898-residue polypeptide: Protein SOV1, mitochondrial (898 aa).

The N-terminal 31 residues, methionine 1–tyrosine 31, are a transit peptide targeting the mitochondrion.

It localises to the mitochondrion. This is Protein SOV1, mitochondrial (SOV1) from Saccharomyces cerevisiae (strain ATCC 204508 / S288c) (Baker's yeast).